The sequence spans 83 residues: Gas vesicle protein G (83 aa).

This sequence belongs to the gas vesicle GvpG family. GvpF to GvpM interact with each other in vitro, and may form multi-subunit complex(es).

Its subcellular location is the gas vesicle. Its function is as follows. Proteins GvpF to GvpM might be involved in nucleating gas vesicle formation. A minor component of the gas vesicle. Gas vesicles are hollow, gas filled proteinaceous nanostructures found in some microorganisms. They allow positioning of halobacteria at the optimal depth for growth in the poorly aerated, shallow brine pools of their habitat. Expression of a 9.5 kb mc-vac DNA fragment containing 2 divergently transcribed regions (gvpD-gvpE-gvpF-gvpG-gvpH-gvpI-gvpJ-gvpK-gvpL-gvpM and gvpA-gvpC-gvpN-gvpO) allows H.volcanii to produce gas vesicles. The protein is Gas vesicle protein G of Haloferax mediterranei (strain ATCC 33500 / DSM 1411 / JCM 8866 / NBRC 14739 / NCIMB 2177 / R-4) (Halobacterium mediterranei).